A 166-amino-acid polypeptide reads, in one-letter code: UPF0561 protein C2orf68 homolog (166 aa).

The segment covering 36-49 has biased composition (basic and acidic residues); it reads RDDYDKKVKQAAKE. A disordered region spans residues 36 to 108; it reads RDDYDKKVKQ…EPEPPGHQLF (73 aa).

Belongs to the UPF0561 family.

The protein is UPF0561 protein C2orf68 homolog of Bos taurus (Bovine).